Consider the following 979-residue polypeptide: Probable serine/threonine-protein kinase iksA (979 aa).

N-linked (GlcNAc...) asparagine glycosylation is found at Asn-32, Asn-110, Asn-120, Asn-121, Asn-147, Asn-155, Asn-161, Asn-220, Asn-231, and Asn-243. The disordered stretch occupies residues 207–245; the sequence is SKSGVNNNNNNNNNDSTTTNNNNNNNTTPPQQQQQQNSS. Over residues 212–244 the composition is skewed to low complexity; that stretch reads NNNNNNNNNDSTTTNNNNNNNTTPPQQQQQQNS. The Protein kinase domain occupies 261-568; the sequence is FKEDIKIGSG…ISQILSTHFI (308 aa). ATP is bound by residues 267–275 and Lys-293; that span reads IGSGGFGSV. The active-site Proton acceptor is the Asp-397. Residues Asn-592, Asn-597, Asn-615, Asn-645, Asn-646, Asn-663, and Asn-699 are each glycosylated (N-linked (GlcNAc...) asparagine). Over residues 593-602 the composition is skewed to polar residues; the sequence is TSVHNTTAST. Residues 593-666 are disordered; it reads TSVHNTTAST…LGNNNNNNTN (74 aa). Over residues 610–666 the composition is skewed to low complexity; the sequence is SISTTNSTTSSSSSTATSSSLSSTTIATTSSSNAINNTTATTTTNSNLGNNNNNNTN. A compositionally biased stretch (acidic residues) spans 713–727; it reads NDDIIIDDDDDDDDS. A disordered region spans residues 713–793; that stretch reads NDDIIIDDDD…GNNGIRKALP (81 aa). 2 stretches are compositionally biased toward low complexity: residues 728-737 and 753-773; these read TNNNDTNNTD and NNKKSSYSRSSSIRSPSSSNK. Residues Asn-731 and Asn-734 are each glycosylated (N-linked (GlcNAc...) asparagine). The chain crosses the membrane as a helical span at residues 846-866; that stretch reads FPSPILLYPLLLLSLIPILVV. N-linked (GlcNAc...) asparagine glycosylation is found at Asn-870 and Asn-894. Helical transmembrane passes span 912-932 and 956-976; these read INTIISIIRFIYYFVISVLLP and FPLLSLFKNLTLLIINLIFIF.

It belongs to the protein kinase superfamily. Ser/Thr protein kinase family.

It localises to the membrane. The catalysed reaction is L-seryl-[protein] + ATP = O-phospho-L-seryl-[protein] + ADP + H(+). It catalyses the reaction L-threonyl-[protein] + ATP = O-phospho-L-threonyl-[protein] + ADP + H(+). The chain is Probable serine/threonine-protein kinase iksA (iksA) from Dictyostelium discoideum (Social amoeba).